Reading from the N-terminus, the 212-residue chain is Thymidylate kinase (212 aa).

10 to 17 (GLEGAGKT) contributes to the ATP binding site.

Belongs to the thymidylate kinase family.

The enzyme catalyses dTMP + ATP = dTDP + ADP. Its function is as follows. Phosphorylation of dTMP to form dTDP in both de novo and salvage pathways of dTTP synthesis. The sequence is that of Thymidylate kinase from Photorhabdus laumondii subsp. laumondii (strain DSM 15139 / CIP 105565 / TT01) (Photorhabdus luminescens subsp. laumondii).